The primary structure comprises 791 residues: Ubiquitin carboxyl-terminal hydrolase 10-A (791 aa).

2 stretches are compositionally biased toward polar residues: residues 118–139 (FSES…SGTG) and 270–284 (DTTE…QTLE). Disordered regions lie at residues 118–156 (FSES…YYSY) and 270–291 (DTTE…EDTA). In terms of domain architecture, USP spans 408 to 788 (RGLINKGNWC…TAYLLYYRRV (381 aa)). Catalysis depends on Cys-417, which acts as the Nucleophile. Residues 560–580 (EVNKEEQEGSDEEWEQVGPRN) form a disordered region. His-742 acts as the Proton acceptor in catalysis.

The protein belongs to the peptidase C19 family. USP10 subfamily.

The protein resides in the cytoplasm. It is found in the nucleus. The enzyme catalyses Thiol-dependent hydrolysis of ester, thioester, amide, peptide and isopeptide bonds formed by the C-terminal Gly of ubiquitin (a 76-residue protein attached to proteins as an intracellular targeting signal).. Functionally, hydrolase that can remove conjugated ubiquitin from target proteins such as p53/tp53, rps2/us5, rps3/us3, rps10/eS10, becn1, snx3 and cftr. Acts as an essential regulator of p53/tp53 stability: in unstressed cells, specifically deubiquitinates p53/tp53 in the cytoplasm, leading to counteracts MDM2 action and stabilize p53/tp53. Following DNA damage, translocates to the nucleus and deubiquitinates p53/tp53, leading to regulate the p53/TP53-dependent DNA damage response. Component of a regulatory loop that controls autophagy and p53/tp53 levels. Plays a key role in 40S ribosome subunit recycling when a ribosome has stalled during translation: acts both by inhibiting formation of stress granules, which store stalled translation pre-initiation complexes, and mediating deubiquitination of 40S ribosome subunits. Deubiquitinates cftr in early endosomes, enhancing its endocytic recycling. This is Ubiquitin carboxyl-terminal hydrolase 10-A (usp10-a) from Xenopus laevis (African clawed frog).